The chain runs to 91 residues: Probable Fe(2+)-trafficking protein (91 aa).

This sequence belongs to the Fe(2+)-trafficking protein family.

Its function is as follows. Could be a mediator in iron transactions between iron acquisition and iron-requiring processes, such as synthesis and/or repair of Fe-S clusters in biosynthetic enzymes. This is Probable Fe(2+)-trafficking protein from Burkholderia ambifaria (strain MC40-6).